The sequence spans 214 residues: Thymidylate kinase (214 aa).

7-14 (GIDGAGKS) provides a ligand contact to ATP.

This sequence belongs to the thymidylate kinase family.

It catalyses the reaction dTMP + ATP = dTDP + ADP. Its function is as follows. Phosphorylation of dTMP to form dTDP in both de novo and salvage pathways of dTTP synthesis. The polypeptide is Thymidylate kinase (Chlorobaculum tepidum (strain ATCC 49652 / DSM 12025 / NBRC 103806 / TLS) (Chlorobium tepidum)).